A 125-amino-acid polypeptide reads, in one-letter code: Large ribosomal subunit protein bL21 (125 aa).

Belongs to the bacterial ribosomal protein bL21 family. As to quaternary structure, part of the 50S ribosomal subunit. Contacts protein L20.

Its function is as follows. This protein binds to 23S rRNA in the presence of protein L20. This Synechococcus sp. (strain CC9311) protein is Large ribosomal subunit protein bL21.